A 208-amino-acid polypeptide reads, in one-letter code: uncharacterized protein (208 aa).

This is an uncharacterized protein from Methanocaldococcus jannaschii (strain ATCC 43067 / DSM 2661 / JAL-1 / JCM 10045 / NBRC 100440) (Methanococcus jannaschii).